The sequence spans 299 residues: Protein FAM228A (299 aa).

The tract at residues 135–201 (AKGTSYQHGR…GRNRYKGASS (67 aa)) is disordered. Residues 146-159 (KTHDTQKEAKETEK) are compositionally biased toward basic and acidic residues. S264 carries the post-translational modification Phosphoserine.

Belongs to the FAM228 family.

The protein is Protein FAM228A (Fam228a) of Mus musculus (Mouse).